Consider the following 524-residue polypeptide: Unconventional prefoldin RPB5 interactor (524 aa).

Disordered stretches follow at residues M1 to P20, S284 to S320, and V335 to M373. Acidic residues predominate over residues D296–S307. At S361 the chain carries Phosphoserine; by RPS6KB1. Phosphoserine is present on S431.

Belongs to the RNA polymerase II subunit 5-mediating protein family. As to quaternary structure, homodimer. Component of the PAQosome complex which is responsible for the biogenesis of several protein complexes and which consists of R2TP complex members RUVBL1, RUVBL2, RPAP3 and PIH1D1, URI complex members PFDN2, PFDN6, PDRG1, UXT and URI1 as well as ASDURF, POLR2E and DNAAF10/WDR92. Interacts with POLR2E/RPB5, RUVBL2 and RUVBL1. Interacts with PFDN2, PFDN4 and STAP1; the interactions are phosphorylation-dependent and occur in a growth-dependent manner in the mitochondrion. Interacts with UXT. Interacts with PPP1CC; the interaction is phosphorylation-dependent and occurs in a growth factor-dependent manner. Interacts (via the middle C-terminal region) with GTF2F1 and GTF2F2. Interacts with DMAP1. Interacts with TSC1 and TSC2. Interacts with PRPF8 and EFTUD2 in a ZNHIT2-dependent manner. Phosphorylated. Phosphorylation occurs essentially on serine residues. Phosphorylation occurs in response to androgen treatment in prostate cancer cells in a mTOR-dependent manner. Phosphorylated; hyperhosphorylated in mitochondria in a mTORC-dependent signaling pathway. Phosphorylated at Ser-361 by RPS6KB1 in a growth factor- and rapamycin-dependent manner. S6K1-mediated mitochondrial phosphorylation at Ser-361 disrupts the URI1-PPP1CC complex in the mitochondrion, relieves PPP1CC phosphatase inhibition activity and hence engages a negative feedback diminishing RPS6KB1 kinase activity, preventing sustained S6K1-dependent signaling.

The protein resides in the nucleus. It localises to the cytoplasm. It is found in the mitochondrion. The protein localises to the cell projection. Its subcellular location is the dendrite. Its function is as follows. Involved in gene transcription regulation. Acts as a transcriptional repressor in concert with the corepressor UXT to regulate androgen receptor (AR) transcription. May act as a tumor suppressor to repress AR-mediated gene transcription and to inhibit anchorage-independent growth in prostate cancer cells. Required for cell survival in ovarian cancer cells. Together with UXT, associates with chromatin to the NKX3-1 promoter region. Functionally, plays a central role in maintaining S6K1 signaling and BAD phosphorylation under normal growth conditions thereby protecting cells from potential deleterious effects of sustained S6K1 signaling. The URI1-PPP1CC complex acts as a central component of a negative feedback mechanism that counteracts excessive S6K1 survival signaling to BAD in response to growth factors. Mediates inhibition of PPP1CC phosphatase activity in mitochondria. Coordinates the regulation of nutrient-sensitive gene expression availability in a mTOR-dependent manner. Seems to be a scaffolding protein able to assemble a prefoldin-like complex that contains PFDs and proteins with roles in transcription and ubiquitination. This Bos taurus (Bovine) protein is Unconventional prefoldin RPB5 interactor (URI1).